The following is a 324-amino-acid chain: PTS system glucose-specific EIICBA component (324 aa).

Residues 1-63 form the PTS EIIC type-1 domain; sequence HLLNVKIGMT…KWDLATPGRE (63 aa). 2 helical membrane passes run 5 to 25 and 28 to 48; these read VKIG…GVLP and TAWW…YFGF. Residues 78–159 form the PTS EIIB type-1 domain; that stretch reads GDLPYEVLAA…QDIMQGKAPA (82 aa). The active-site Phosphocysteine intermediate; for EIIB activity is the cysteine 100. Residues 156 to 177 form a disordered region; it reads KAPARAEEKPKTAASEAAESET. Residues 167–177 show a composition bias toward low complexity; that stretch reads TAASEAAESET. A PTS EIIA type-1 domain is found at 194–298; the sequence is DQVFSQKMMG…SIVTPVIFTN (105 aa). Histidine 246 functions as the Tele-phosphohistidine intermediate; for EIIA activity in the catalytic mechanism.

The protein resides in the cell membrane. It catalyses the reaction N(pros)-phospho-L-histidyl-[protein] + D-glucose(out) = D-glucose 6-phosphate(in) + L-histidyl-[protein]. Functionally, the phosphoenolpyruvate-dependent sugar phosphotransferase system (sugar PTS), a major carbohydrate active transport system, catalyzes the phosphorylation of incoming sugar substrates concomitantly with their translocation across the cell membrane. This system is involved in glucose transport. This chain is PTS system glucose-specific EIICBA component (ptsG), found in Geobacillus stearothermophilus (Bacillus stearothermophilus).